Consider the following 126-residue polypeptide: Ribonuclease P protein component (126 aa).

It belongs to the RnpA family. In terms of assembly, consists of a catalytic RNA component (M1 or rnpB) and a protein subunit.

The catalysed reaction is Endonucleolytic cleavage of RNA, removing 5'-extranucleotides from tRNA precursor.. Its function is as follows. RNaseP catalyzes the removal of the 5'-leader sequence from pre-tRNA to produce the mature 5'-terminus. It can also cleave other RNA substrates such as 4.5S RNA. The protein component plays an auxiliary but essential role in vivo by binding to the 5'-leader sequence and broadening the substrate specificity of the ribozyme. This Brevibacillus brevis (strain 47 / JCM 6285 / NBRC 100599) protein is Ribonuclease P protein component.